Consider the following 220-residue polypeptide: Ribonuclease HII (220 aa).

An RNase H type-2 domain is found at 32–220 (KHIAGIDEAG…FAPIKGRFDC (189 aa)). A divalent metal cation contacts are provided by aspartate 38, glutamate 39, and aspartate 130.

It belongs to the RNase HII family. It depends on Mn(2+) as a cofactor. Mg(2+) serves as cofactor.

It localises to the cytoplasm. The catalysed reaction is Endonucleolytic cleavage to 5'-phosphomonoester.. In terms of biological role, endonuclease that specifically degrades the RNA of RNA-DNA hybrids. The chain is Ribonuclease HII from Brucella ovis (strain ATCC 25840 / 63/290 / NCTC 10512).